The primary structure comprises 203 residues: Sec-independent protein translocase protein TatB (203 aa).

A helical membrane pass occupies residues 1 to 21 (MFDIGWTELLVIAVVLIVVVG). The interval 179-203 (KPKRTTAVRKPATLKKPAQTKKDEA) is disordered.

This sequence belongs to the TatB family. The Tat system comprises two distinct complexes: a TatABC complex, containing multiple copies of TatA, TatB and TatC subunits, and a separate TatA complex, containing only TatA subunits. Substrates initially bind to the TatABC complex, which probably triggers association of the separate TatA complex to form the active translocon.

It localises to the cell inner membrane. Part of the twin-arginine translocation (Tat) system that transports large folded proteins containing a characteristic twin-arginine motif in their signal peptide across membranes. Together with TatC, TatB is part of a receptor directly interacting with Tat signal peptides. TatB may form an oligomeric binding site that transiently accommodates folded Tat precursor proteins before their translocation. The protein is Sec-independent protein translocase protein TatB of Rhizobium johnstonii (strain DSM 114642 / LMG 32736 / 3841) (Rhizobium leguminosarum bv. viciae).